A 215-amino-acid polypeptide reads, in one-letter code: Pyrrolidone-carboxylate peptidase (215 aa).

Catalysis depends on residues glutamate 80, cysteine 143, and histidine 167.

Belongs to the peptidase C15 family. In terms of assembly, homotetramer.

It localises to the cytoplasm. It catalyses the reaction Release of an N-terminal pyroglutamyl group from a polypeptide, the second amino acid generally not being Pro.. Functionally, removes 5-oxoproline from various penultimate amino acid residues except L-proline. This chain is Pyrrolidone-carboxylate peptidase, found in Bacillus thuringiensis subsp. konkukian (strain 97-27).